We begin with the raw amino-acid sequence, 414 residues long: NADH-quinone oxidoreductase subunit D (414 aa).

This sequence belongs to the complex I 49 kDa subunit family. In terms of assembly, NDH-1 is composed of 14 different subunits. Subunits NuoB, C, D, E, F, and G constitute the peripheral sector of the complex.

Its subcellular location is the cell inner membrane. The catalysed reaction is a quinone + NADH + 5 H(+)(in) = a quinol + NAD(+) + 4 H(+)(out). Its function is as follows. NDH-1 shuttles electrons from NADH, via FMN and iron-sulfur (Fe-S) centers, to quinones in the respiratory chain. The immediate electron acceptor for the enzyme in this species is believed to be ubiquinone. Couples the redox reaction to proton translocation (for every two electrons transferred, four hydrogen ions are translocated across the cytoplasmic membrane), and thus conserves the redox energy in a proton gradient. The protein is NADH-quinone oxidoreductase subunit D of Akkermansia muciniphila (strain ATCC BAA-835 / DSM 22959 / JCM 33894 / BCRC 81048 / CCUG 64013 / CIP 107961 / Muc).